The primary structure comprises 151 residues: Ribosomal RNA large subunit methyltransferase H (151 aa).

S-adenosyl-L-methionine contacts are provided by residues leucine 73, glycine 100, and 119 to 124; that span reads LSKMTM.

The protein belongs to the RNA methyltransferase RlmH family. As to quaternary structure, homodimer.

The protein localises to the cytoplasm. It catalyses the reaction pseudouridine(1915) in 23S rRNA + S-adenosyl-L-methionine = N(3)-methylpseudouridine(1915) in 23S rRNA + S-adenosyl-L-homocysteine + H(+). Its function is as follows. Specifically methylates the pseudouridine at position 1915 (m3Psi1915) in 23S rRNA. The chain is Ribosomal RNA large subunit methyltransferase H from Campylobacter concisus (strain 13826).